Here is a 147-residue protein sequence, read N- to C-terminus: Nucleoside diphosphate kinase (147 aa).

6 residues coordinate ATP: Lys-9, Phe-57, Arg-85, Thr-91, Arg-102, and Asn-112. Residue His-115 is the Pros-phosphohistidine intermediate of the active site.

Belongs to the NDK family. As to quaternary structure, homotetramer. The cofactor is Mg(2+).

It localises to the cytoplasm. The enzyme catalyses a 2'-deoxyribonucleoside 5'-diphosphate + ATP = a 2'-deoxyribonucleoside 5'-triphosphate + ADP. It catalyses the reaction a ribonucleoside 5'-diphosphate + ATP = a ribonucleoside 5'-triphosphate + ADP. Major role in the synthesis of nucleoside triphosphates other than ATP. The ATP gamma phosphate is transferred to the NDP beta phosphate via a ping-pong mechanism, using a phosphorylated active-site intermediate. The chain is Nucleoside diphosphate kinase from Kosmotoga olearia (strain ATCC BAA-1733 / DSM 21960 / TBF 19.5.1).